We begin with the raw amino-acid sequence, 188 residues long: Holliday junction branch migration complex subunit RuvA (188 aa).

The segment at 1-63 (MIEIIEGIYK…QEDMTIYGFD (63 aa)) is domain I. A domain II region spans residues 64 to 142 (SKVKKETFEK…VVEVNEEMLE (79 aa)). Position 142 (Glu-142) is a region of interest, flexible linker. Residues 142-188 (EAIEALVSLGYSKTQARNAVSKVLKESPNISNVSKIIKEALKILAKI) are domain III.

The protein belongs to the RuvA family. As to quaternary structure, homotetramer. Forms an RuvA(8)-RuvB(12)-Holliday junction (HJ) complex. HJ DNA is sandwiched between 2 RuvA tetramers; dsDNA enters through RuvA and exits via RuvB. An RuvB hexamer assembles on each DNA strand where it exits the tetramer. Each RuvB hexamer is contacted by two RuvA subunits (via domain III) on 2 adjacent RuvB subunits; this complex drives branch migration. In the full resolvosome a probable DNA-RuvA(4)-RuvB(12)-RuvC(2) complex forms which resolves the HJ.

The protein localises to the cytoplasm. In terms of biological role, the RuvA-RuvB-RuvC complex processes Holliday junction (HJ) DNA during genetic recombination and DNA repair, while the RuvA-RuvB complex plays an important role in the rescue of blocked DNA replication forks via replication fork reversal (RFR). RuvA specifically binds to HJ cruciform DNA, conferring on it an open structure. The RuvB hexamer acts as an ATP-dependent pump, pulling dsDNA into and through the RuvAB complex. HJ branch migration allows RuvC to scan DNA until it finds its consensus sequence, where it cleaves and resolves the cruciform DNA. This chain is Holliday junction branch migration complex subunit RuvA, found in Fervidobacterium nodosum (strain ATCC 35602 / DSM 5306 / Rt17-B1).